The primary structure comprises 411 residues: Signal-transducing adaptor protein 2 (411 aa).

One can recognise a PH domain in the interval 20–120 (HYYESFLEKK…GFILTVVELR (101 aa)). A Phosphotyrosine modification is found at Tyr22. One can recognise an SH2 domain in the interval 152–248 (WCFLQVSRLE…RALVPFLLDE (97 aa)). At Tyr250 the chain carries Phosphotyrosine; by PTK6. The interval 291 to 320 (VPVSVSSQEDKLPQLPPLPQLPDTDENYVT) is disordered. Tyr318 and Tyr330 each carry phosphotyrosine. The segment at 338 to 364 (SSQAVPLKPKKPARLPAKPPKPSVVPK) is disordered. A coiled-coil region spans residues 390–410 (TRLGDITAELEEKLQKRRALE).

Interacts with PTK6 and CSF1R. Phosphorylated on tyrosine. Phosphorylated by PTK6 at Tyr-250 modulates PTK6-mediated STAT3 activation. Widely expressed.

It is found in the cytoplasm. Its subcellular location is the membrane. In terms of biological role, substrate of protein kinase PTK6. May play a regulatory role in the acute-phase response in systemic inflammation and may modulate STAT3 activity. This Mus musculus (Mouse) protein is Signal-transducing adaptor protein 2 (Stap2).